A 176-amino-acid chain; its full sequence is Inner membrane assembly complex subunit 17 (176 aa).

The N-terminal 28 residues, 1 to 28, are a transit peptide targeting the mitochondrion; it reads MLRVLPTSFKSISTRSAFRACQLSPLTV. Topologically, residues 29–98 are mitochondrial matrix; it reads YCPLKSSQGT…MSQEVSLKRF (70 aa). Residues 99-121 form a helical membrane-spanning segment; it reads VRPLWVFFLMSSTVYLILHYVWW. Over 122–176 the chain is Mitochondrial intermembrane; sequence KLEVVEKEKELQSHVESLEMELDQTLKSQNQNVSSSQNNGNNKTNDKPWYRKWFF. Positions 123–151 form a coiled coil; it reads LEVVEKEKELQSHVESLEMELDQTLKSQN. A compositionally biased stretch (low complexity) spans 149–163; sequence SQNQNVSSSQNNGNN. The tract at residues 149–168 is disordered; sequence SQNQNVSSSQNNGNNKTNDK.

This sequence belongs to the INA17 family. Component of the inner membrane assembly (INA) complex, composed of INA17 and INA22. Interacts with a subset of F(1)F(0)-ATP synthase subunits of the F(1)-domain and the peripheral stalk.

The protein localises to the mitochondrion inner membrane. In terms of biological role, component of the INA complex (INAC) that promotes the biogenesis of mitochondrial F(1)F(0)-ATP synthase. INAC facilitates the assembly of the peripheral stalk and promotes the assembly of the catalytic F(1)-domain with the membrane-embedded F(0)-domain. This chain is Inner membrane assembly complex subunit 17, found in Zygosaccharomyces rouxii (strain ATCC 2623 / CBS 732 / NBRC 1130 / NCYC 568 / NRRL Y-229).